The primary structure comprises 303 residues: Porphobilinogen deaminase (303 aa).

Residue Cys-241 is modified to S-(dipyrrolylmethanemethyl)cysteine.

Belongs to the HMBS family. Monomer. Dipyrromethane serves as cofactor.

It carries out the reaction 4 porphobilinogen + H2O = hydroxymethylbilane + 4 NH4(+). It functions in the pathway porphyrin-containing compound metabolism; protoporphyrin-IX biosynthesis; coproporphyrinogen-III from 5-aminolevulinate: step 2/4. The protein operates within porphyrin-containing compound metabolism; chlorophyll biosynthesis. Functionally, tetrapolymerization of the monopyrrole PBG into the hydroxymethylbilane pre-uroporphyrinogen in several discrete steps. The polypeptide is Porphobilinogen deaminase (Roseiflexus castenholzii (strain DSM 13941 / HLO8)).